Here is a 170-residue protein sequence, read N- to C-terminus: MAADDHFSLFGLPARFDIDAQALERAWRAVAAQVHPDRYATASPAERRVAMQWSARANEAYRQLRDPLLRARYLCEQAGVDLQTESNTAMDPAFLMQQMQWREMLDEARDDAAVFAELDAELSDARRQMRETLATLLDERHDYAAAGQKVREWMFVEKLAQELAAARPAG.

One can recognise a J domain in the interval 5 to 79 (DHFSLFGLPA…RARYLCEQAG (75 aa)).

Belongs to the HscB family. Interacts with HscA and stimulates its ATPase activity.

Functionally, co-chaperone involved in the maturation of iron-sulfur cluster-containing proteins. Seems to help targeting proteins to be folded toward HscA. In Bordetella petrii (strain ATCC BAA-461 / DSM 12804 / CCUG 43448), this protein is Co-chaperone protein HscB homolog.